Reading from the N-terminus, the 514-residue chain is Threonine synthase (514 aa).

At Lys-124 the chain carries N6-(pyridoxal phosphate)lysine. Gly-277, Asn-278, Phe-279, Asp-281, and Thr-449 together coordinate pyridoxal 5'-phosphate. Ser-467 is subject to Phosphoserine.

It belongs to the threonine synthase family. Requires pyridoxal 5'-phosphate as cofactor.

It carries out the reaction O-phospho-L-homoserine + H2O = L-threonine + phosphate. Its pathway is amino-acid biosynthesis; L-threonine biosynthesis; L-threonine from L-aspartate: step 5/5. In terms of biological role, catalyzes the gamma-elimination of phosphate from L-phosphohomoserine and the beta-addition of water to produce L-threonine. This chain is Threonine synthase (THR4), found in Saccharomyces cerevisiae (strain ATCC 204508 / S288c) (Baker's yeast).